Reading from the N-terminus, the 309-residue chain is Glutaminase (309 aa).

Positions 64, 114, 160, 167, 191, 243, and 261 each coordinate substrate.

This sequence belongs to the glutaminase family. In terms of assembly, homotetramer.

It carries out the reaction L-glutamine + H2O = L-glutamate + NH4(+). The protein is Glutaminase of Methylorubrum extorquens (strain PA1) (Methylobacterium extorquens).